The chain runs to 244 residues: Uridylate kinase (244 aa).

17–20 (KVSG) serves as a coordination point for ATP. The interval 25-30 (GDKGFG) is involved in allosteric activation by GTP. G59 provides a ligand contact to UMP. ATP-binding residues include G60 and R64. Residues D80 and 141-148 (VGNPFFTT) contribute to the UMP site. ATP-binding residues include T168, Q169, Y174, and D177.

This sequence belongs to the UMP kinase family. Homohexamer.

The protein localises to the cytoplasm. It carries out the reaction UMP + ATP = UDP + ADP. It functions in the pathway pyrimidine metabolism; CTP biosynthesis via de novo pathway; UDP from UMP (UMPK route): step 1/1. With respect to regulation, allosterically activated by GTP. Inhibited by UTP. In terms of biological role, catalyzes the reversible phosphorylation of UMP to UDP. The protein is Uridylate kinase of Ehrlichia ruminantium (strain Welgevonden).